Consider the following 447-residue polypeptide: uncharacterized protein (447 aa).

Residues Pro39 to Gln76 form a disordered region. A compositionally biased stretch (basic and acidic residues) spans His61 to Asp72.

Belongs to the 3-oxoacid CoA-transferase subunit A family.

This is an uncharacterized protein from Archaeoglobus fulgidus (strain ATCC 49558 / DSM 4304 / JCM 9628 / NBRC 100126 / VC-16).